A 344-amino-acid polypeptide reads, in one-letter code: S-adenosylmethionine:tRNA ribosyltransferase-isomerase (344 aa).

It belongs to the QueA family. As to quaternary structure, monomer.

Its subcellular location is the cytoplasm. It catalyses the reaction 7-aminomethyl-7-carbaguanosine(34) in tRNA + S-adenosyl-L-methionine = epoxyqueuosine(34) in tRNA + adenine + L-methionine + 2 H(+). Its pathway is tRNA modification; tRNA-queuosine biosynthesis. In terms of biological role, transfers and isomerizes the ribose moiety from AdoMet to the 7-aminomethyl group of 7-deazaguanine (preQ1-tRNA) to give epoxyqueuosine (oQ-tRNA). The sequence is that of S-adenosylmethionine:tRNA ribosyltransferase-isomerase from Lactiplantibacillus plantarum (strain ATCC BAA-793 / NCIMB 8826 / WCFS1) (Lactobacillus plantarum).